A 423-amino-acid chain; its full sequence is RNA polymerase sigma factor SigA (423 aa).

The segment at 1–76 (MKKSKRKNAQ…EEDLPIPKIS (76 aa)) is disordered. Over residues 21–70 (VQEEAEELPEFPEGEPDPDLEDPDLALEDDLLDLPEEGEGLDLEEEEEDL) the composition is skewed to acidic residues. Residues 78 to 113 (SDPVRQYLHEIGQVPLLTLEEEVELARKVEEGMEAI) are sigma-70 factor domain-1. The segment at 187–257 (LIEANLRLVV…NRAIADQART (71 aa)) is sigma-70 factor domain-2. Residues 211–214 (DLIQ) carry the Interaction with polymerase core subunit RpoC motif. Residues 266 to 344 (ETINKLSRTA…DEHLPSPVDA (79 aa)) form a sigma-70 factor domain-3 region. The sigma-70 factor domain-4 stretch occupies residues 357–409 (ALSKLSEREAMVLKLRKGLIDGREHTLEEVGAFFGVTRERIRQIENKALRKLK). A DNA-binding region (H-T-H motif) is located at residues 383 to 402 (LEEVGAFFGVTRERIRQIEN).

This sequence belongs to the sigma-70 factor family. RpoD/SigA subfamily. Interacts transiently with the RNA polymerase catalytic core formed by RpoA, RpoB, RpoC and RpoZ (2 alpha, 1 beta, 1 beta' and 1 omega subunit) to form the RNA polymerase holoenzyme that can initiate transcription.

The protein resides in the cytoplasm. Functionally, sigma factors are initiation factors that promote the attachment of RNA polymerase to specific initiation sites and are then released. This sigma factor is the primary sigma factor during exponential growth. The protein is RNA polymerase sigma factor SigA of Thermus thermophilus (strain ATCC BAA-163 / DSM 7039 / HB27).